An 82-amino-acid polypeptide reads, in one-letter code: Cytochrome c oxidase subunit 8, mitochondrial (82 aa).

The N-terminal 31 residues, 1-31 (MFSRVALRAAPRQQPFSLVARRTFQTTRAQL), are a transit peptide targeting the mitochondrion. The Mitochondrial matrix portion of the chain corresponds to 32-52 (SSPYHYPEGPRSNLPFNPKTR). The helical transmembrane segment at 53–75 (FFWFRYLMYCVVGFGSPVAIAVW) threads the bilayer. The Mitochondrial intermembrane portion of the chain corresponds to 76 to 82 (QTYRPRS).

The protein belongs to the cytochrome c oxidase VIIc family. In terms of assembly, component of the cytochrome c oxidase (complex IV, CIV), a multisubunit enzyme composed of 11 subunits. The complex is composed of a catalytic core of 3 subunits Cox1, Cox2 and Cox3, encoded in the mitochondrial DNA, and 8 supernumerary subunits Cox4, Cox5a/Cox5, Cox6, Cox7, Cox8, Cox7a/Cox9, Cox6b/Cox12 and Cox6a/Cox13, which are encoded in the nuclear genome. The complex exists as a monomer or a dimer and forms respiratory supercomplexes (SCs) in the inner mitochondrial membrane with NADH-ubiquinone oxidoreductase (complex I, CI) and ubiquinol-cytochrome c oxidoreductase (cytochrome b-c1 complex, complex III, CIII), resulting in various different assemblies (supercomplexes I(1)IV(1), I(1)III(3)IV(2), III(2)IV(1) and III(2)IV(2) as well as larger supercomplexes of compositions like I(1)III(2)IV(5-6)).

It is found in the mitochondrion inner membrane. It participates in energy metabolism; oxidative phosphorylation. Component of the cytochrome c oxidase, the last enzyme in the mitochondrial electron transport chain which drives oxidative phosphorylation. The respiratory chain contains 3 multisubunit complexes succinate dehydrogenase (complex II, CII), ubiquinol-cytochrome c oxidoreductase (cytochrome b-c1 complex, complex III, CIII) and cytochrome c oxidase (complex IV, CIV), that cooperate to transfer electrons derived from NADH and succinate to molecular oxygen, creating an electrochemical gradient over the inner membrane that drives transmembrane transport and the ATP synthase. Cytochrome c oxidase is the component of the respiratory chain that catalyzes the reduction of oxygen to water. Electrons originating from reduced cytochrome c in the intermembrane space (IMS) are transferred via the dinuclear copper A center (CU(A)) of Cox2 and heme A of Cox1 to the active site in Cox1, a binuclear center (BNC) formed by heme A3 and copper B (CU(B)). The BNC reduces molecular oxygen to 2 water molecules using 4 electrons from cytochrome c in the IMS and 4 protons from the mitochondrial matrix. This Neurospora crassa (strain ATCC 24698 / 74-OR23-1A / CBS 708.71 / DSM 1257 / FGSC 987) protein is Cytochrome c oxidase subunit 8, mitochondrial (cox-15).